We begin with the raw amino-acid sequence, 229 residues long: Ribosome maturation factor RimM (229 aa).

The disordered stretch occupies residues 1–37 (MAGHDSGNAKRGRSPSFGVFVRKPVERTSAKGTSDGA). Residues 148-229 (ADEFYWVDLI…RVVVDWEADY (82 aa)) form the PRC barrel domain.

The protein belongs to the RimM family. As to quaternary structure, binds ribosomal protein uS19.

It is found in the cytoplasm. In terms of biological role, an accessory protein needed during the final step in the assembly of 30S ribosomal subunit, possibly for assembly of the head region. Essential for efficient processing of 16S rRNA. May be needed both before and after RbfA during the maturation of 16S rRNA. It has affinity for free ribosomal 30S subunits but not for 70S ribosomes. The sequence is that of Ribosome maturation factor RimM from Burkholderia pseudomallei (strain 668).